Here is a 174-residue protein sequence, read N- to C-terminus: RNA pyrophosphohydrolase (174 aa).

The Nudix hydrolase domain maps to 6–149; that stretch reads GFRANVGIII…KRDVYRKVMK (144 aa). Positions 38-59 match the Nudix box motif; the sequence is GGVDDGESAEEAMYRELYEEVG.

It belongs to the Nudix hydrolase family. RppH subfamily. Requires a divalent metal cation as cofactor.

Accelerates the degradation of transcripts by removing pyrophosphate from the 5'-end of triphosphorylated RNA, leading to a more labile monophosphorylated state that can stimulate subsequent ribonuclease cleavage. The polypeptide is RNA pyrophosphohydrolase (Shewanella sp. (strain W3-18-1)).